A 232-amino-acid chain; its full sequence is Small ribosomal subunit protein uS3 (232 aa).

The 69-residue stretch at 39 to 107 (VRQFLTSELK…PAQINIAEVR (69 aa)) folds into the KH type-2 domain. Positions 213–232 (AANAVEPKGDKPKKQRKGRK) are disordered.

Belongs to the universal ribosomal protein uS3 family. As to quaternary structure, part of the 30S ribosomal subunit. Forms a tight complex with proteins S10 and S14.

In terms of biological role, binds the lower part of the 30S subunit head. Binds mRNA in the 70S ribosome, positioning it for translation. The sequence is that of Small ribosomal subunit protein uS3 from Vibrio parahaemolyticus serotype O3:K6 (strain RIMD 2210633).